Consider the following 889-residue polypeptide: MAQPLVVKKDDDLDEEEYYSPFLGIEKGAVLQEARVFHDPQLDARRCCQVITKLLYLLNQGDTFTKVEATEVFFATTKLFQSKDAGLRRMVYLMIKELSPSADEVIIVTSSLMKDMNSKTDMYRANAIRVLCRIIDSTLLTQIERYLKQAIVDKNPVVASAALVSGIYLLQTSPEVVKRWSNEVQEAVQSRAALVQFHALALLHQIRQNDRLAVSKLVTSLTRGSVRSPLAQCLLIRYTSQVIRESSMNSQGGDRPFFDFLESCLRNKAEMVILEAARAITELNGVTSRELTPAITVLQLFLSSSKPVLRFAAVRTLNKVASTHPLAVTNCNIDMESLISDQNRSIATLAITTLLKTGNESSVDRLMKQMTNFMSDIADEFKIVVVEAIRSLCLKFPLKYRSLMNFLSNILREEGGFEYKKAIVDSIIILIRDIPDAKESGLFHLCEFIEDCEFTYMSTQILHFLGNEGPKTSDPSKYIRYIYNRVILENATVRASAVSTLAKFGALVDSLKPRIFVLLRRCLFDGDDEVRDRATLYLKLLGGEATVGETEKDVNEFLFGSFDIPLVNLETSLQNYEPSEAPFDISSVSLETKSQPLAEKKTTGKKPTGPASALSGPVPTVDASYEKLLSSIPEFAGFGKLFKSSAPVELTEAETEYSVNVVKHIYDGHVVLQYNCTNTIPEQLLEEVVVFVDASEADEFSEVATKSLRSLPYDSPGQTFVAFEKLEGVLATGKFSNILKFIVKEVDPSTGEADDDGVEDEYQLEDLEITSADYMLKVGVSNFRNAWESMDPESERVDEYGLGARESLAEAVSAVIGILGMQPCEGTDVVPSNSRSHTCLLSGVFIGNVKVLVRLSFGLSGPKEVAMKLAVRSDDPEISDKIHEIVANG.

HEAT repeat units follow at residues 67 to 102 (VEAT…SPSA), 103 to 140 (DEVI…STLL), 289 to 326 (RELT…THPL), 328 to 360 (VTNC…TGNE), and 361 to 398 (SSVD…KFPL). The interval 596-617 (PLAEKKTTGKKPTGPASALSGP) is disordered.

It belongs to the COPG family. Oligomeric complex that consists of at least the alpha, beta, beta', gamma, delta, epsilon and zeta subunits.

It localises to the cytoplasm. The protein localises to the golgi apparatus membrane. It is found in the cytoplasmic vesicle. Its subcellular location is the COPI-coated vesicle membrane. Functionally, the coatomer is a cytosolic protein complex that binds to dilysine motifs and reversibly associates with Golgi non-clathrin-coated vesicles, which further mediate biosynthetic protein transport from the ER, via the Golgi up to the trans Golgi network. Coatomer complex is required for budding from Golgi membranes, and is essential for the retrograde Golgi-to-ER transport of dilysine-tagged proteins. The protein is Coatomer subunit gamma-2 of Oryza sativa subsp. japonica (Rice).